Reading from the N-terminus, the 42-residue chain is Beta-defensin 6 (42 aa).

Q1 bears the Pyrrolidone carboxylic acid mark. Cystine bridges form between C9–C38, C16–C31, and C21–C39.

The protein belongs to the beta-defensin family. Neutrophilic granules.

It localises to the secreted. Has bactericidal activity. Active against E.coli ML35 and S.aureus 502A. The protein is Beta-defensin 6 (DEFB6) of Bos taurus (Bovine).